Reading from the N-terminus, the 407-residue chain is MPHSQISPAEGSRRILEEYHIDEDVGFALPHPLEELPDTYRPWILVARNLPKLIENGKLREEVEKLPTLRTEELRGHRLQRLAHLALGYITMAYVWNRGDDDIRKVLPRNLAVPYCELSEKLGLPPILSYADCVLANWKKKDPNGPMTYENMDILFSFPGGDCDKGFFLVSLMVEIAASPAIKAIPTVSSAVEHQDPKALEKALCSIAASLEKAKEIFKRMRDFVDPDTFFHVLRIYLSGWKGNPKLPEGLLYEGVWDTPKKFSGGSAGQSSIFQSLDVLLGIKHDVGEGSAAEFLQEMREYMPPAHRNFLSSLESAPPVREFVILRRNEDLKEAYNECVNGLVSLRMFHLSIVDTYIVKPSKQKPMGGHKSEEPSNTENRGTGGTDVMNFLRSVKDTTKKALLSWP.

H350 contributes to the heme b binding site. The interval S362–V388 is disordered.

This sequence belongs to the indoleamine 2,3-dioxygenase family. As to quaternary structure, monomer. Requires heme b as cofactor.

It localises to the cytoplasm. The protein resides in the cytosol. It carries out the reaction D-tryptophan + O2 = N-formyl-D-kynurenine. The catalysed reaction is L-tryptophan + O2 = N-formyl-L-kynurenine. Activity is inhibited by and MTH-trp (methylthiohydantoin-DL-tryptophan), modestly inhibited by L-1MT (1-methyl-L-tryptophan) but not D-1MT (1-methyl-D-tryptophan). Catalyzes the first and rate limiting step of the catabolism of the essential amino acid tryptophan along the kynurenine pathway. Involved in the peripheral immune tolerance, contributing to maintain homeostasis by preventing autoimmunity or immunopathology that would result from uncontrolled and overreacting immune responses. Tryptophan shortage inhibits T lymphocytes division and accumulation of tryptophan catabolites induces T-cell apoptosis and differentiation of regulatory T-cells. Acts as a suppressor of anti-tumor immunity. Limits the growth of intracellular pathogens by depriving tryptophan. Protects the fetus from maternal immune rejection. The protein is Indoleamine 2,3-dioxygenase 1 of Rattus norvegicus (Rat).